A 357-amino-acid chain; its full sequence is 3-dehydroquinate synthase (357 aa).

NAD(+)-binding positions include 104–108 (GVVGD), 128–129 (TT), Lys141, and 168–171 (FLET). Positions 183, 243, and 260 each coordinate Zn(2+).

Belongs to the sugar phosphate cyclases superfamily. Dehydroquinate synthase family. Co(2+) is required as a cofactor. It depends on Zn(2+) as a cofactor. Requires NAD(+) as cofactor.

It is found in the cytoplasm. It carries out the reaction 7-phospho-2-dehydro-3-deoxy-D-arabino-heptonate = 3-dehydroquinate + phosphate. Its pathway is metabolic intermediate biosynthesis; chorismate biosynthesis; chorismate from D-erythrose 4-phosphate and phosphoenolpyruvate: step 2/7. Functionally, catalyzes the conversion of 3-deoxy-D-arabino-heptulosonate 7-phosphate (DAHP) to dehydroquinate (DHQ). The protein is 3-dehydroquinate synthase of Streptococcus pyogenes serotype M5 (strain Manfredo).